A 125-amino-acid polypeptide reads, in one-letter code: Cystatin-like cysteine protease inhibitor EPIC2B (125 aa).

The first 21 residues, 1–21 (MSFLRPTLALLAVTALVTTSA), serve as a signal peptide directing secretion. N-linked (GlcNAc...) asparagine glycosylation occurs at asparagine 45. The short motif at 68 to 72 (QVVSG) is the Secondary area of contact element.

Belongs to the cystatin family. As to quaternary structure, interacts with the host papain-like cysteine protease PIP1. Interacts with the host papain-like cysteine protease RCR3. Interacts with the host papain-like cysteine protease C14.

It is found in the secreted. In terms of biological role, secreted effector that interacts with and inhibits the pathogenesis-related papain-like cysteine proteases C14, PIP1 and RCR3 of host plants. Inhibition of host proteases by a pathogen extracellular protease inhibitor forms a specific type of defense-counterdefense mechanism between plants and microbial pathogens. The chain is Cystatin-like cysteine protease inhibitor EPIC2B from Phytophthora infestans (strain T30-4) (Potato late blight agent).